A 118-amino-acid chain; its full sequence is MADPILYSQALAHGRRIKGSVSKVRRVLDQIRGRSYREALIMLEFMPYRSTAPITKVLRSAVANAEHNLGLDPSTLIINRATADMGSSMKRYRPRAQGRAFAIKKQTCHISIGVVTQT.

Belongs to the universal ribosomal protein uL22 family. Part of the 50S ribosomal subunit.

It localises to the plastid. The protein resides in the organellar chromatophore. Its function is as follows. This protein binds specifically to 23S rRNA. In terms of biological role, the globular domain of the protein is located near the polypeptide exit tunnel on the outside of the subunit, while an extended beta-hairpin is found that lines the wall of the exit tunnel in the center of the 70S ribosome. This Paulinella chromatophora protein is Large ribosomal subunit protein uL22c (rpl22).